Here is a 347-residue protein sequence, read N- to C-terminus: MRPEPTEHPERTAAQRLYQYNVDLKVAFVLYAVAKLHLPDLLADGPRTTADLAAATGSDPSRLRRLLRAAAGADALREVPEDSFELAPMGDLLRSGHPRSMRGMTTFFAEPDVLAAYGDLVESVRTGVPAFQLRHREPLYDFLARPQHKEVRDEFDAAMVEFGQYFADDFLTSFDFGRFTRFADIGGGRGQFLAGVLTAVPSSTGVLVDGPAVAASAHKFLASQNLTERVEVRIGDFFDVLPTGCDAYVLRGVLEDWADADAVRLLVRIRQAMGDAPEARLLILDSVIGETGELGKVLDLDMLVLVEGEHRTRAQWDDLLARAGFDIVGIHPAGDVWAVIECRGTAG.

S-adenosyl-L-methionine contacts are provided by residues Asp-209 and 235–237 (GDF).

Belongs to the class I-like SAM-binding methyltransferase superfamily. Cation-independent O-methyltransferase family. Homodimer.

The catalysed reaction is 8-amino-8-demethylriboflavin + 2 S-adenosyl-L-methionine = roseoflavin + 2 S-adenosyl-L-homocysteine + 2 H(+). The protein operates within antibiotic biosynthesis. Functionally, catalyzes the S-adenosyl methionine-dependent conversion of 8-amino-8-demethyl-D-riboflavin (AF) into 8-methylamino-8-demethyl-D-riboflavin (MAF) and roseoflavin (RoF), the last two steps in the biosynthesis of the antibiotic roseoflavin. In Streptomyces davaonensis (strain DSM 101723 / JCM 4913 / KCC S-0913 / 768), this protein is 8-amino-8-demethylriboflavin N,N-dimethyltransferase.